The primary structure comprises 446 residues: Enolase 1 (446 aa).

Substrate-binding residues include histidine 164 and glutamate 173. The active-site Proton donor is glutamate 216. The Mg(2+) site is built by aspartate 251, glutamate 302, and aspartate 329. 2 residues coordinate substrate: glutamate 302 and aspartate 329. Lysine 354 functions as the Proton acceptor in the catalytic mechanism. Residues serine 381–serine 384 and lysine 405 each bind substrate.

It belongs to the enolase family. Homodimer. Mg(2+) is required as a cofactor.

Its subcellular location is the cytoplasm. It carries out the reaction (2R)-2-phosphoglycerate = phosphoenolpyruvate + H2O. The protein operates within carbohydrate degradation; glycolysis; pyruvate from D-glyceraldehyde 3-phosphate: step 4/5. This is Enolase 1 (ENO1) from Zea mays (Maize).